The chain runs to 448 residues: N-succinylarginine dihydrolase (448 aa).

Residues 19–28 (GGLSYGNVAS), asparagine 110, and 137–138 (HR) contribute to the substrate site. The active site involves glutamate 174. Arginine 214 contributes to the substrate binding site. Histidine 250 is an active-site residue. Substrate contacts are provided by aspartate 252 and asparagine 365. Cysteine 371 serves as the catalytic Nucleophile.

This sequence belongs to the succinylarginine dihydrolase family. As to quaternary structure, homodimer.

The catalysed reaction is N(2)-succinyl-L-arginine + 2 H2O + 2 H(+) = N(2)-succinyl-L-ornithine + 2 NH4(+) + CO2. It participates in amino-acid degradation; L-arginine degradation via AST pathway; L-glutamate and succinate from L-arginine: step 2/5. Catalyzes the hydrolysis of N(2)-succinylarginine into N(2)-succinylornithine, ammonia and CO(2). The chain is N-succinylarginine dihydrolase from Pseudomonas aeruginosa (strain LESB58).